A 247-amino-acid chain; its full sequence is Probable transcriptional regulatory protein Dalk_2958 (247 aa).

It belongs to the TACO1 family.

It localises to the cytoplasm. This chain is Probable transcriptional regulatory protein Dalk_2958, found in Desulfatibacillum aliphaticivorans.